Reading from the N-terminus, the 233-residue chain is Large ribosomal subunit protein uL1 (233 aa).

This sequence belongs to the universal ribosomal protein uL1 family. In terms of assembly, part of the 50S ribosomal subunit.

In terms of biological role, binds directly to 23S rRNA. The L1 stalk is quite mobile in the ribosome, and is involved in E site tRNA release. Functionally, protein L1 is also a translational repressor protein, it controls the translation of the L11 operon by binding to its mRNA. The protein is Large ribosomal subunit protein uL1 of Brucella canis (strain ATCC 23365 / NCTC 10854 / RM-666).